The following is a 194-amino-acid chain: Probable nicotinate-nucleotide adenylyltransferase (194 aa).

The protein belongs to the NadD family.

It carries out the reaction nicotinate beta-D-ribonucleotide + ATP + H(+) = deamido-NAD(+) + diphosphate. It functions in the pathway cofactor biosynthesis; NAD(+) biosynthesis; deamido-NAD(+) from nicotinate D-ribonucleotide: step 1/1. Functionally, catalyzes the reversible adenylation of nicotinate mononucleotide (NaMN) to nicotinic acid adenine dinucleotide (NaAD). The chain is Probable nicotinate-nucleotide adenylyltransferase from Brucella suis biovar 1 (strain 1330).